A 616-amino-acid polypeptide reads, in one-letter code: Dihydroxy-acid dehydratase (616 aa).

Aspartate 81 is a binding site for Mg(2+). Cysteine 122 serves as a coordination point for [2Fe-2S] cluster. 2 residues coordinate Mg(2+): aspartate 123 and lysine 124. The residue at position 124 (lysine 124) is an N6-carboxylysine. Residue cysteine 195 coordinates [2Fe-2S] cluster. Mg(2+) is bound at residue glutamate 491. The active-site Proton acceptor is serine 517.

It belongs to the IlvD/Edd family. In terms of assembly, homodimer. It depends on [2Fe-2S] cluster as a cofactor. Requires Mg(2+) as cofactor.

It catalyses the reaction (2R)-2,3-dihydroxy-3-methylbutanoate = 3-methyl-2-oxobutanoate + H2O. It carries out the reaction (2R,3R)-2,3-dihydroxy-3-methylpentanoate = (S)-3-methyl-2-oxopentanoate + H2O. It functions in the pathway amino-acid biosynthesis; L-isoleucine biosynthesis; L-isoleucine from 2-oxobutanoate: step 3/4. Its pathway is amino-acid biosynthesis; L-valine biosynthesis; L-valine from pyruvate: step 3/4. In terms of biological role, functions in the biosynthesis of branched-chain amino acids. Catalyzes the dehydration of (2R,3R)-2,3-dihydroxy-3-methylpentanoate (2,3-dihydroxy-3-methylvalerate) into 2-oxo-3-methylpentanoate (2-oxo-3-methylvalerate) and of (2R)-2,3-dihydroxy-3-methylbutanoate (2,3-dihydroxyisovalerate) into 2-oxo-3-methylbutanoate (2-oxoisovalerate), the penultimate precursor to L-isoleucine and L-valine, respectively. The polypeptide is Dihydroxy-acid dehydratase (Pectobacterium atrosepticum (strain SCRI 1043 / ATCC BAA-672) (Erwinia carotovora subsp. atroseptica)).